The following is a 396-amino-acid chain: NAD(P)H oxidoreductase RTN4IP1, mitochondrial (396 aa).

The N-terminal 40 residues, M1–S40, are a transit peptide targeting the mitochondrion. In terms of domain architecture, Enoyl reductase (ER) spans G52–I393. 12 residues coordinate NADPH: S214, G216, V217, S237, Y255, N276, L300, A341, F343, H386, A387, and R388.

This sequence belongs to the zinc-containing alcohol dehydrogenase family. Quinone oxidoreductase subfamily. Interacts with RTN4, UQCRC1 and UQCRC2. As to expression, widely expressed in mitochondria-enriched tissues. Found in heart, muscle, kidney, liver, brain and placenta.

It is found in the mitochondrion matrix. The protein resides in the mitochondrion outer membrane. The enzyme catalyses a 3-demethylubiquinone + NADH + 2 H(+) = a 3-demethylubiquinol + NAD(+). It carries out the reaction a 3-demethylubiquinone + NADPH + 2 H(+) = a 3-demethylubiquinol + NADP(+). The catalysed reaction is 3-demethylubiquinone-10 + NADH + 2 H(+) = 3-demethylubiquinol-10 + NAD(+). It catalyses the reaction 3-demethylubiquinone-10 + NADPH + 2 H(+) = 3-demethylubiquinol-10 + NADP(+). The protein operates within cofactor biosynthesis; ubiquinone biosynthesis. Its function is as follows. NAD(P)H oxidoreductase involved in the ubiquinone biosynthetic pathway. Required for the O-methyltransferase activity of COQ3. Able to catalyze the oxidoreduction of 3-demethylubiquinone into 3-demethylubiquinol in vitro. However, it is unclear if 3-demethylubiquinone constitutes a substrate in vivo. May also play a role in the regulation of retinal ganglion cell (RGC) neurite outgrowth, and hence in the development of the inner retina and optic nerve. Appears to be a potent inhibitor of regeneration following spinal cord injury. The protein is NAD(P)H oxidoreductase RTN4IP1, mitochondrial of Homo sapiens (Human).